An 888-amino-acid chain; its full sequence is Pumilio homology domain family member 4 (888 aa).

3 positions are modified to phosphothreonine: threonine 205, threonine 212, and threonine 252. Disordered stretches follow at residues 236–270 and 467–551; these read KAKK…IPPT and MNSA…RKIE. Residues 243 to 270 are compositionally biased toward polar residues; that stretch reads GANNTAKTRTQSISFDNTPSSTSFIPPT. Serine 256 carries the phosphoserine modification. 2 stretches are compositionally biased toward low complexity: residues 478 to 499 and 521 to 543; these read NNNS…YNNK and NNNN…NSNS. The PUM-HD domain maps to 539–888; the sequence is TNSNSAEKQR…RIIGMLHLDS (350 aa). Pumilio repeat units lie at residues 563-598, 599-634, 635-671, 672-707, 708-743, 744-783, 784-821, and 823-861; these read QYIG…AIFE, ETKD…VLTK, ISSP…IVVD, SLRP…FIFD, AISD…NLCD, KLLA…KIVH, LLKP…EILN, and GGET…RLSE.

Is not essential for haploid growth, but may affect diploid formation. This Saccharomyces cerevisiae (strain ATCC 204508 / S288c) (Baker's yeast) protein is Pumilio homology domain family member 4 (PUF4).